A 382-amino-acid polypeptide reads, in one-letter code: Methenyltetrahydrofolate synthase domain-containing protein (382 aa).

Residues 306–382 (TTVYLSDIPP…QAKCVSSQKM (77 aa)) enclose the RRM domain.

The chain is Methenyltetrahydrofolate synthase domain-containing protein (mthfsd) from Danio rerio (Zebrafish).